The following is a 94-amino-acid chain: Small ribosomal subunit protein bS18 (94 aa).

It belongs to the bacterial ribosomal protein bS18 family. As to quaternary structure, part of the 30S ribosomal subunit. Forms a tight heterodimer with protein bS6.

Binds as a heterodimer with protein bS6 to the central domain of the 16S rRNA, where it helps stabilize the platform of the 30S subunit. This Albidiferax ferrireducens (strain ATCC BAA-621 / DSM 15236 / T118) (Rhodoferax ferrireducens) protein is Small ribosomal subunit protein bS18.